The chain runs to 472 residues: Ribosomal protein uS12 methylthiotransferase RimO (472 aa).

An MTTase N-terminal domain is found at 33-143; it reads NRIGFVSLGC…VLKHVHKYVP (111 aa). Positions 42, 78, 107, 175, 179, and 182 each coordinate [4Fe-4S] cluster. One can recognise a Radical SAM core domain in the interval 161-398; it reads LTPKHYAYLK…MELQAEISAE (238 aa). Residues 401-467 enclose the TRAM domain; that stretch reads ARFVGRTLDI…EHDLWAEVVD (67 aa).

The protein belongs to the methylthiotransferase family. RimO subfamily. [4Fe-4S] cluster is required as a cofactor.

Its subcellular location is the cytoplasm. It catalyses the reaction L-aspartate(89)-[ribosomal protein uS12]-hydrogen + (sulfur carrier)-SH + AH2 + 2 S-adenosyl-L-methionine = 3-methylsulfanyl-L-aspartate(89)-[ribosomal protein uS12]-hydrogen + (sulfur carrier)-H + 5'-deoxyadenosine + L-methionine + A + S-adenosyl-L-homocysteine + 2 H(+). Its function is as follows. Catalyzes the methylthiolation of an aspartic acid residue of ribosomal protein uS12. The protein is Ribosomal protein uS12 methylthiotransferase RimO of Shewanella putrefaciens (strain CN-32 / ATCC BAA-453).